The following is a 195-amino-acid chain: Small ribosomal subunit protein uS4 (195 aa).

Residues 109 to 183 enclose the S4 RNA-binding domain; that stretch reads RRLQTQVFKL…VKRKNLKKNQ (75 aa). Positions 165–195 are disordered; sequence PFGGGRPGRVKRKNLKKNQGGGGGAAEEEED.

This sequence belongs to the universal ribosomal protein uS4 family. In terms of assembly, component of the small ribosomal subunit. Identified in a IGF2BP1-dependent mRNP granule complex containing untranslated mRNAs. Part of the small subunit (SSU) processome, composed of more than 70 proteins and the RNA chaperone small nucleolar RNA (snoRNA) U3.

It localises to the cytoplasm. Its subcellular location is the nucleus. The protein localises to the nucleolus. Functionally, component of the small ribosomal subunit. The ribosome is a large ribonucleoprotein complex responsible for the synthesis of proteins in the cell. Part of the small subunit (SSU) processome, first precursor of the small eukaryotic ribosomal subunit. During the assembly of the SSU processome in the nucleolus, many ribosome biogenesis factors, an RNA chaperone and ribosomal proteins associate with the nascent pre-rRNA and work in concert to generate RNA folding, modifications, rearrangements and cleavage as well as targeted degradation of pre-ribosomal RNA by the RNA exosome. The sequence is that of Small ribosomal subunit protein uS4 from Drosophila melanogaster (Fruit fly).